The primary structure comprises 73 residues: YFSYNDKIIKILEAEYLNADHHFTSGTVISDKLEIACGSGILRVKKLQQESKKALNIEEFLCGTNILKDTVLK.

The protein belongs to the Fmt family.

The catalysed reaction is L-methionyl-tRNA(fMet) + (6R)-10-formyltetrahydrofolate = N-formyl-L-methionyl-tRNA(fMet) + (6S)-5,6,7,8-tetrahydrofolate + H(+). Attaches a formyl group to the free amino group of methionyl-tRNA(fMet). The formyl group appears to play a dual role in the initiator identity of N-formylmethionyl-tRNA by promoting its recognition by IF2 and preventing the misappropriation of this tRNA by the elongation apparatus. This is Methionyl-tRNA formyltransferase (fmt) from Rickettsia rhipicephali.